Here is a 143-residue protein sequence, read N- to C-terminus: Large ribosomal subunit protein eL28z (143 aa).

This sequence belongs to the eukaryotic ribosomal protein eL28 family. In terms of assembly, component of the large ribosomal subunit. In terms of tissue distribution, expressed in seedlings, roots, stems, leaves, inflorescences and siliques.

The protein resides in the cytoplasm. The protein localises to the nucleus. It is found in the nucleolus. It localises to the nucleoplasm. Its function is as follows. Component of the large ribosomal subunit. Essential in leaf polarity establishment, probably having a role for translation in leaf dorsoventral patterning to specify leaf adaxial identity. This is Large ribosomal subunit protein eL28z from Arabidopsis thaliana (Mouse-ear cress).